The following is a 1005-amino-acid chain: Translocated actin-recruiting phosphoprotein (1005 aa).

Residues 1 to 10 (MTNSISGDQP) show a composition bias toward polar residues. Disordered stretches follow at residues 1 to 36 (MTNSISGDQPTVTTFTSSTTSASGASGSLGASSVST), 74 to 128 (PTVT…DYEP), 191 to 214 (SIDDSSTSDPENTSGGAAALNSLR), 343 to 365 (SIDDSSTSDPENTSGGAAALNSL), 611 to 645 (WGTQAGPSSEDDGISFSNETPGAGPAAAPSPTPSS), 661 to 748 (NIRD…DGPA), and 792 to 847 (TGTS…TSLM). Low complexity-rich tracts occupy residues 11 to 36 (TVTTFTSSTTSASGASGSLGASSVST) and 74 to 121 (PTVT…SSDH). Composition is skewed to polar residues over residues 191–205 (SIDDSSTSDPENTSG) and 343–357 (SIDDSSTSDPENTSG). Low complexity-rich tracts occupy residues 661-700 (NIRDTNVNTTNTTPTTQSTDASTDTSDIDNINTNNQTDDI), 715-734 (GDISETESSSGDDSGSVSSS), and 831-846 (STTTLRTGTGATTTSL).

This sequence belongs to the chlamydial CPn_0572/CT_456/TC_0741 family. Phosphorylated on a tyrosine on attachment to the host cell. Tyrosine phosphorylation is temporally and spatially associated with recruitment of actin to the site of chlamydial entry. Phosphorylated Tarp seems to remain cytoplasmically exposed on the inclusion membrane at one side of internalized elementary bodies for several hours after entry.

Its subcellular location is the secreted. Its function is as follows. Appears to initiate or participate in signaling events that regulate the actin recruitment, which ultimately leads to internalization. In Chlamydia trachomatis serovar L2 (strain ATCC VR-902B / DSM 19102 / 434/Bu), this protein is Translocated actin-recruiting phosphoprotein (tarP).